A 351-amino-acid polypeptide reads, in one-letter code: Outer membrane porin PhoE (351 aa).

Positions methionine 1–alanine 21 are cleaved as a signal peptide.

It belongs to the Gram-negative porin family. As to quaternary structure, homotrimer. Forms mixed heterotrimers with OmpC and with OmpF; other mixed heterotrimers are also probable.

It is found in the cell outer membrane. Uptake of inorganic phosphate, phosphorylated compounds, and some other negatively charged solutes. This chain is Outer membrane porin PhoE (phoE), found in Escherichia coli (strain K12).